The following is a 581-amino-acid chain: Arginine--tRNA ligase (581 aa).

A 'HIGH' region motif is present at residues 126 to 136 (PNLAKEMHVGH).

The protein belongs to the class-I aminoacyl-tRNA synthetase family. As to quaternary structure, monomer.

Its subcellular location is the cytoplasm. It catalyses the reaction tRNA(Arg) + L-arginine + ATP = L-arginyl-tRNA(Arg) + AMP + diphosphate. This is Arginine--tRNA ligase from Shewanella piezotolerans (strain WP3 / JCM 13877).